The primary structure comprises 353 residues: Probable cytochrome c oxidase subunit 2 (353 aa).

The first 42 residues, 1–42 (MTARELVCSQRVGQGLSRRLRPLVLAVTLGVLVVTLSGCSWS), serve as a signal peptide directing secretion. 2 helical membrane-spanning segments follow: residues 63–83 (LWIGAVVASLVVGVIVWGLIF) and 110–130 (LVLTVTPFLIISMLFYFTVIV). Residues His-246, Cys-287, Cys-291, and His-295 each contribute to the Cu cation site.

Belongs to the cytochrome c oxidase subunit 2 family. Requires Cu cation as cofactor. Heme is required as a cofactor.

The protein resides in the cell membrane. It catalyses the reaction 4 Fe(II)-[cytochrome c] + O2 + 8 H(+)(in) = 4 Fe(III)-[cytochrome c] + 2 H2O + 4 H(+)(out). Its function is as follows. Subunits I and II form the functional core of the enzyme complex. Electrons originating in cytochrome c are transferred via heme a and Cu(A) to the binuclear center formed by heme a3 and Cu(B). In Mycobacterium leprae (strain TN), this protein is Probable cytochrome c oxidase subunit 2 (ctaC).